Reading from the N-terminus, the 640-residue chain is Chaperone protein HtpG (640 aa).

The tract at residues 1–343 (MQTAENVEHL…SNDLPLNVSR (343 aa)) is a; substrate-binding. Residues 344–564 (EILQESKDID…THDMSGNLGR (221 aa)) form a b region. The tract at residues 565–640 (LLKSAGQKVP…LLLQNILSGK (76 aa)) is c.

The protein belongs to the heat shock protein 90 family. In terms of assembly, homodimer.

It is found in the cytoplasm. Functionally, molecular chaperone. Has ATPase activity. This chain is Chaperone protein HtpG, found in Nitrosomonas eutropha (strain DSM 101675 / C91 / Nm57).